The following is a 125-amino-acid chain: Small ribosomal subunit protein eS8 (125 aa).

Residues 1-23 show a composition bias toward basic residues; that stretch reads MQFQGRSRRKYTGAKLKSARGKR. Positions 1-34 are disordered; it reads MQFQGRSRRKYTGAKLKSARGKRKFELGREPAAT.

Belongs to the eukaryotic ribosomal protein eS8 family. In terms of assembly, part of the 30S ribosomal subunit.

In Methanococcoides burtonii (strain DSM 6242 / NBRC 107633 / OCM 468 / ACE-M), this protein is Small ribosomal subunit protein eS8.